We begin with the raw amino-acid sequence, 496 residues long: Glutamyl-tRNA(Gln) amidotransferase subunit A (496 aa).

Catalysis depends on charge relay system residues lysine 75 and serine 150. Serine 174 acts as the Acyl-ester intermediate in catalysis.

It belongs to the amidase family. GatA subfamily. As to quaternary structure, heterotrimer of A, B and C subunits.

It carries out the reaction L-glutamyl-tRNA(Gln) + L-glutamine + ATP + H2O = L-glutaminyl-tRNA(Gln) + L-glutamate + ADP + phosphate + H(+). In terms of biological role, allows the formation of correctly charged Gln-tRNA(Gln) through the transamidation of misacylated Glu-tRNA(Gln) in organisms which lack glutaminyl-tRNA synthetase. The reaction takes place in the presence of glutamine and ATP through an activated gamma-phospho-Glu-tRNA(Gln). This chain is Glutamyl-tRNA(Gln) amidotransferase subunit A, found in Burkholderia ambifaria (strain ATCC BAA-244 / DSM 16087 / CCUG 44356 / LMG 19182 / AMMD) (Burkholderia cepacia (strain AMMD)).